Here is a 423-residue protein sequence, read N- to C-terminus: MTDDTEYRCSFCGKEHHQVDDLIAGPDVRICSECVVLSCEIVEDRRNEALAKQDAFIKRKQRSVLEGLPKPAEIYAFLDEYVIGQQKAKRDLSVAVYNHYKRLVSTKSESENEVELSKSNILLIGPTGCGKTYLAQTLARMLRVPFAVADATALTEAGYVGDDVENVLLKLLQDADFDITRAEAGIVCIDEIDKISRKADSPSITRDVSGEGVQQALLKILEGTAASVPLQGGKKHTQYEQASINTRNILFIVAGAFSGIEEIISSRIGRSNMGFGSDLLRKDTDVFDQILPEDLRKFGLIPEFIGRLPIVTAISHLDGEDMIRVLTEPKNALVKQYKRLFSLDGVSLGFDHEALEAIVELALKRKTGARALRSVMESILSPIMFDVPSRGDIESVRITAETVAGGGPHLTMRCARSNYIRSA.

Residues 1–50 (MTDDTEYRCSFCGKEHHQVDDLIAGPDVRICSECVVLSCEIVEDRRNEAL) enclose the ClpX-type ZB domain. Zn(2+) is bound by residues Cys-9, Cys-12, Cys-31, and Cys-34. Position 126–133 (126–133 (PTGCGKTY)) interacts with ATP.

Belongs to the ClpX chaperone family. Component of the ClpX-ClpP complex. Forms a hexameric ring that, in the presence of ATP, binds to fourteen ClpP subunits assembled into a disk-like structure with a central cavity, resembling the structure of eukaryotic proteasomes.

Functionally, ATP-dependent specificity component of the Clp protease. It directs the protease to specific substrates. Can perform chaperone functions in the absence of ClpP. The sequence is that of ATP-dependent Clp protease ATP-binding subunit ClpX from Tropheryma whipplei (strain TW08/27) (Whipple's bacillus).